A 322-amino-acid polypeptide reads, in one-letter code: Glycerol-3-phosphate dehydrogenase [NAD(P)+] (322 aa).

NADPH is bound by residues W11, R31, R32, and K101. Residues K101 and G130 each coordinate sn-glycerol 3-phosphate. A134 serves as a coordination point for NADPH. Residues K184, D237, S247, R248, and N249 each coordinate sn-glycerol 3-phosphate. K184 functions as the Proton acceptor in the catalytic mechanism. R248 contacts NADPH. 2 residues coordinate NADPH: V270 and E272.

The protein belongs to the NAD-dependent glycerol-3-phosphate dehydrogenase family.

The protein resides in the cytoplasm. It carries out the reaction sn-glycerol 3-phosphate + NAD(+) = dihydroxyacetone phosphate + NADH + H(+). It catalyses the reaction sn-glycerol 3-phosphate + NADP(+) = dihydroxyacetone phosphate + NADPH + H(+). The protein operates within membrane lipid metabolism; glycerophospholipid metabolism. Catalyzes the reduction of the glycolytic intermediate dihydroxyacetone phosphate (DHAP) to sn-glycerol 3-phosphate (G3P), the key precursor for phospholipid synthesis. The sequence is that of Glycerol-3-phosphate dehydrogenase [NAD(P)+] from Thermus thermophilus (strain ATCC BAA-163 / DSM 7039 / HB27).